We begin with the raw amino-acid sequence, 192 residues long: Intraflagellar transport protein 22 (192 aa).

GTP is bound by residues glycine 12–threonine 19 and tryptophan 62–glutamine 69.

It belongs to the small GTPase superfamily. Rab family. Component of the IFT complex B, composed of IFT88, IFT70, IFT52, IFT46, IFT27, IFT25 and IFT22.

The protein resides in the cell projection. Its subcellular location is the cilium. It is found in the flagellum. Component of the intraflagellar transport (IFT) complex B. Functions in regulating the cellular pool size of both complex A and complex B and thus plays a critical role in determining the cellular availability of IFT particles. The sequence is that of Intraflagellar transport protein 22 (FAP9) from Chlamydomonas reinhardtii (Chlamydomonas smithii).